We begin with the raw amino-acid sequence, 247 residues long: Ribonuclease 3 (247 aa).

One can recognise an RNase III domain in the interval 21-149; sequence LQKLSKKIGI…LVGAIYLDQG (129 aa). Glu62 contributes to the Mg(2+) binding site. Asp66 is a catalytic residue. Asn135 and Glu138 together coordinate Mg(2+). Glu138 is an active-site residue. The 70-residue stretch at 176-245 folds into the DRBM domain; sequence DYKTQLQEYS…AKELYNRIRK (70 aa).

It belongs to the ribonuclease III family. In terms of assembly, homodimer. The cofactor is Mg(2+).

The protein resides in the cytoplasm. The enzyme catalyses Endonucleolytic cleavage to 5'-phosphomonoester.. Functionally, digests double-stranded RNA. Involved in the processing of primary rRNA transcript to yield the immediate precursors to the large and small rRNAs (23S and 16S). Processes some mRNAs, and tRNAs when they are encoded in the rRNA operon. Processes pre-crRNA and tracrRNA of type II CRISPR loci if present in the organism. The protein is Ribonuclease 3 of Leptospira interrogans serogroup Icterohaemorrhagiae serovar copenhageni (strain Fiocruz L1-130).